An 83-amino-acid polypeptide reads, in one-letter code: Short neurotoxin NCA-02/NCA-05/UER-05 (83 aa).

A signal peptide spans 1–21 (MKTLLLTLVVVTMVCLDLGYT). 4 disulfides stabilise this stretch: C24–C45, C38–C62, C64–C75, and C76–C81.

This sequence belongs to the three-finger toxin family. Short-chain subfamily. Type I alpha-neurotoxin sub-subfamily. In terms of tissue distribution, expressed by the venom gland.

The protein localises to the secreted. Its function is as follows. Binds to muscle nicotinic acetylcholine receptor (nAChR) and inhibit acetylcholine from binding to the receptor, thereby impairing neuromuscular transmission. This Laticauda colubrina (Yellow-lipped sea krait) protein is Short neurotoxin NCA-02/NCA-05/UER-05.